We begin with the raw amino-acid sequence, 1282 residues long: Indigoidine synthase (1282 aa).

The adenylation stretch occupies residues 24–379; sequence AQRVAEHPEA…GGIQLARGYL (356 aa). In terms of domain architecture, Carrier spans 937–1012; that stretch reads APRTETEKEI…KLARRLEREV (76 aa). Serine 972 is subject to O-(pantetheine 4'-phosphoryl)serine. The segment at 1030–1138 is thioesterase; it reads RPVICWPGLG…APGSPKVRAE (109 aa).

The protein belongs to the ATP-dependent AMP-binding enzyme family. The cofactor is pantetheine 4'-phosphate.

It catalyses the reaction 2 FMN + 2 L-glutamine + 2 ATP + O2 = indigoidine + 2 FMNH2 + 2 AMP + 2 diphosphate + 2 H2O. The enzyme catalyses FMN + L-glutamine + ATP = 3-amino-1,5-dihydropyridine-2,6-dione + FMNH2 + AMP + diphosphate. It carries out the reaction 2 3-amino-1,5-dihydropyridine-2,6-dione + O2 = indigoidine + 2 H2O. It functions in the pathway pigment biosynthesis. Its function is as follows. Nonribosomal peptide synthetase involved in the biosynthesis of the blue pigment indigoidine. Catalyzes the synthesis of the blue pigment using L-Gln as a substrate. Two glutamine molecules are cyclized and oxidized to form indigoidine. The protein is Indigoidine synthase of Streptomyces lavendulae.